A 710-amino-acid polypeptide reads, in one-letter code: uncharacterized protein (710 aa).

The segment at 1–20 is disordered; it reads MKQRQARLIGTPSQTRRQQE. Residues 13–42 are a coiled coil; that stretch reads SQTRRQQELAEKLEKVKEVLEDEKKRQFNE.

The protein belongs to the IIV-6 268L family.

This is an uncharacterized protein from Invertebrate iridescent virus 6 (IIV-6).